The chain runs to 662 residues: DNA ligase (662 aa).

Residues 31–35 and 79–80 each bind NAD(+); these read DKDYD and SL. The N6-AMP-lysine intermediate role is filled by Lys-121. NAD(+) is bound by residues Arg-143, Glu-177, and Lys-313. Residues Cys-406, Cys-409, Cys-422, and Cys-428 each contribute to the Zn(2+) site. The 77-residue stretch at 586-662 folds into the BRCT domain; the sequence is VLESPFMGKT…LSEEEFENMI (77 aa).

Belongs to the NAD-dependent DNA ligase family. LigA subfamily. Mg(2+) serves as cofactor. Mn(2+) is required as a cofactor.

It carries out the reaction NAD(+) + (deoxyribonucleotide)n-3'-hydroxyl + 5'-phospho-(deoxyribonucleotide)m = (deoxyribonucleotide)n+m + AMP + beta-nicotinamide D-nucleotide.. In terms of biological role, DNA ligase that catalyzes the formation of phosphodiester linkages between 5'-phosphoryl and 3'-hydroxyl groups in double-stranded DNA using NAD as a coenzyme and as the energy source for the reaction. It is essential for DNA replication and repair of damaged DNA. This Clostridium perfringens (strain SM101 / Type A) protein is DNA ligase.